Reading from the N-terminus, the 350-residue chain is Flap endonuclease 1 (350 aa).

Positions 1–102 (MGVNLKDLIP…KEIEKRRKIR (102 aa)) are N-domain. Residues Asp31, Asp84, Glu156, Glu158, Asp177, Asp179, and Asp240 each coordinate Mg(2+). The segment at 120-262 (AARRYAMMSA…KALQLVKAYK (143 aa)) is I-domain. The interval 341 to 349 (KQLGLEAWF) is interaction with PCNA.

It belongs to the XPG/RAD2 endonuclease family. FEN1 subfamily. Interacts with PCNA. PCNA stimulates the nuclease activity without altering cleavage specificity. Mg(2+) serves as cofactor.

Functionally, structure-specific nuclease with 5'-flap endonuclease and 5'-3' exonuclease activities involved in DNA replication and repair. During DNA replication, cleaves the 5'-overhanging flap structure that is generated by displacement synthesis when DNA polymerase encounters the 5'-end of a downstream Okazaki fragment. Binds the unpaired 3'-DNA end and kinks the DNA to facilitate 5' cleavage specificity. Cleaves one nucleotide into the double-stranded DNA from the junction in flap DNA, leaving a nick for ligation. Also involved in the base excision repair (BER) pathway. Acts as a genome stabilization factor that prevents flaps from equilibrating into structures that lead to duplications and deletions. Also possesses 5'-3' exonuclease activity on nicked or gapped double-stranded DNA. The polypeptide is Flap endonuclease 1 (Staphylothermus marinus (strain ATCC 43588 / DSM 3639 / JCM 9404 / F1)).